The chain runs to 508 residues: MQYKDLRDFIGQLEGLGELRRIARPVSPNLEMTEICDRLLRAGGPAVVFEQPAGAPHGDIYSVPVLANLFGTTRRVAFGMGAESMEDLRDIGRVLSALKEPEPPRGLREAGKLFTLAKSVWDMAPKRVSGPACQEVVWEGNDVDLARLPIQTCWPGDAAPLITWGLVVTKGPHKKRQNLGIYRQQVIGRNQVIMRWLAHRGGALDFREHALANPGKPFPIAVALGADPATILGAVTPVPDTLSEYQFAGLLRGSRTALAGCLTPTLSELSVPASAEIVLEGHIQPDPNHPSGYQHALEGPFGDHTGYYNEQDWFPVFTIDRITMRRDPIYHSTYTGKPPDEPAVLGVALNEVFVPLLQKQFPEITDFYLPPEGCSYRMALVRMKKQYAGHAKRVMFGVWSFLRQFMYTKFIVVVDDDVDVRDWKEVIWAITTRVDPSRDTVLVDNTPIDYLDFASPVSGLGSKMGIDATDKWPGETTREWGTSIAMDAAVKAKVDTLWETLFERPAGR.

Asparagine 178 is a binding site for Mn(2+). Residues 181–183, 195–197, and 200–201 contribute to the prenylated FMN site; these read IYR, RWL, and RG. Glutamate 244 contacts Mn(2+). The active-site Proton donor is the aspartate 303.

This sequence belongs to the UbiD family. In terms of assembly, homohexamer. The cofactor is prenylated FMN. It depends on Mn(2+) as a cofactor.

The protein resides in the cell membrane. The enzyme catalyses a 4-hydroxy-3-(all-trans-polyprenyl)benzoate + H(+) = a 2-(all-trans-polyprenyl)phenol + CO2. The protein operates within cofactor biosynthesis; ubiquinone biosynthesis. Catalyzes the decarboxylation of 3-octaprenyl-4-hydroxy benzoate to 2-octaprenylphenol, an intermediate step in ubiquinone biosynthesis. The polypeptide is 3-octaprenyl-4-hydroxybenzoate carboxy-lyase (Cupriavidus taiwanensis (strain DSM 17343 / BCRC 17206 / CCUG 44338 / CIP 107171 / LMG 19424 / R1) (Ralstonia taiwanensis (strain LMG 19424))).